A 143-amino-acid polypeptide reads, in one-letter code: Nuclear transcription factor Y subunit B-4 (143 aa).

The segment at 1–23 (MSEGFDGTENGGGGGGGGVGKEQ) is disordered. Over residues 9 to 20 (ENGGGGGGGGVG) the composition is skewed to gly residues. Residues 27–33 (LPIANIG) mediate DNA binding. The subunit association domain (SAD) stretch occupies residues 54 to 65 (VQECVSEFISFI). The segment covering 117 to 130 (KGSRASELPVKKDV) has biased composition (basic and acidic residues). The disordered stretch occupies residues 117-143 (KGSRASELPVKKDVVLNGDPGSSFEGM).

It belongs to the NFYB/HAP3 subunit family. In terms of assembly, heterotrimeric transcription factor composed of three components, NF-YA, NF-YB and NF-YC. NF-YB and NF-YC must interact and dimerize for NF-YA association and DNA binding. In terms of tissue distribution, ubiquitous.

Its subcellular location is the nucleus. Component of the NF-Y/HAP transcription factor complex. The NF-Y complex stimulates the transcription of various genes by recognizing and binding to a CCAAT motif in promoters. May regulate the expression of photosynthetic genes, and may be involved in chloroplast and amyloplast development. The chain is Nuclear transcription factor Y subunit B-4 (NFYB4) from Oryza sativa subsp. japonica (Rice).